A 503-amino-acid chain; its full sequence is MEFSVKSGSPEKQRSACIVVGVFEPRRLSPIAEQLDKISDGYISALLRRGELEGKPGQTLLLHHVPNVLSERILLIGCGKERELDERQYKQVIQKTINTLNDTGSMEAVCFLTELHVKGRNNYWKVRQAVETAKETLYSFDQLKTNKSEPRRPLRKMVFNVPTRRELTSGERAIQHGLAIAAGIKAAKDLGNMPPNICNAAYLASQARQLADSYSKNVITRVIGEQQMKELGMHSYLAVGQGSQNESLMSVIEYKGNASEDARPIVLVGKGLTFDSGGISIKPSEGMDEMKYDMCGAAAVYGVMRMVAELQLPVNVIGVLAGCENMPGGRAYRPGDVLTTMSGQTVEVLNTDAEGRLVLCDVLTYVERFEPEAVIDVATLTGACVIALGHHITGLMANHNPLAHELIAASEQSGDRAWRLPLGDEYQEQLESNFADMANIGGRPGGAITAGCFLSRFTRKYNWAHLDIAGTAWRSGKAKGATGRPVALLAQFLLNRAGFNGEE.

Mn(2+) is bound by residues Lys-270 and Asp-275. Lys-282 is an active-site residue. Residues Asp-293, Asp-352, and Glu-354 each contribute to the Mn(2+) site. The active site involves Arg-356.

Belongs to the peptidase M17 family. Mn(2+) is required as a cofactor.

The protein resides in the cytoplasm. The catalysed reaction is Release of an N-terminal amino acid, Xaa-|-Yaa-, in which Xaa is preferably Leu, but may be other amino acids including Pro although not Arg or Lys, and Yaa may be Pro. Amino acid amides and methyl esters are also readily hydrolyzed, but rates on arylamides are exceedingly low.. It carries out the reaction Release of an N-terminal amino acid, preferentially leucine, but not glutamic or aspartic acids.. In terms of biological role, presumably involved in the processing and regular turnover of intracellular proteins. Catalyzes the removal of unsubstituted N-terminal amino acids from various peptides. The polypeptide is Probable cytosol aminopeptidase (Shigella dysenteriae serotype 1 (strain Sd197)).